We begin with the raw amino-acid sequence, 424 residues long: Kynureninase (424 aa).

Residues Leu109, Thr110, 137-140, Asp222, His225, and Tyr247 each bind pyridoxal 5'-phosphate; that span reads FPSD. Position 248 is an N6-(pyridoxal phosphate)lysine (Lys248). Trp278 and Asn306 together coordinate pyridoxal 5'-phosphate.

This sequence belongs to the kynureninase family. As to quaternary structure, homodimer. Pyridoxal 5'-phosphate is required as a cofactor.

The enzyme catalyses L-kynurenine + H2O = anthranilate + L-alanine + H(+). It catalyses the reaction 3-hydroxy-L-kynurenine + H2O = 3-hydroxyanthranilate + L-alanine + H(+). It functions in the pathway amino-acid degradation; L-kynurenine degradation; L-alanine and anthranilate from L-kynurenine: step 1/1. Its pathway is cofactor biosynthesis; NAD(+) biosynthesis; quinolinate from L-kynurenine: step 2/3. In terms of biological role, catalyzes the cleavage of L-kynurenine (L-Kyn) and L-3-hydroxykynurenine (L-3OHKyn) into anthranilic acid (AA) and 3-hydroxyanthranilic acid (3-OHAA), respectively. The protein is Kynureninase of Koribacter versatilis (strain Ellin345).